We begin with the raw amino-acid sequence, 266 residues long: Undecaprenyl-diphosphatase (266 aa).

8 helical membrane-spanning segments follow: residues 3–23 (MSLL…FLPV), 41–61 (GTET…VVLY), 86–106 (VLVG…AIKA), 108–128 (LNTP…ILVI), 149–171 (FGVG…ATIM), 184–204 (AEYS…LALW), 220–240 (IGFV…LGVV), and 245–265 (FAPF…WLLA).

Belongs to the UppP family.

It is found in the cell inner membrane. The enzyme catalyses di-trans,octa-cis-undecaprenyl diphosphate + H2O = di-trans,octa-cis-undecaprenyl phosphate + phosphate + H(+). In terms of biological role, catalyzes the dephosphorylation of undecaprenyl diphosphate (UPP). Confers resistance to bacitracin. In Rhizorhabdus wittichii (strain DSM 6014 / CCUG 31198 / JCM 15750 / NBRC 105917 / EY 4224 / RW1) (Sphingomonas wittichii), this protein is Undecaprenyl-diphosphatase.